Here is a 111-residue protein sequence, read N- to C-terminus: Antitoxin PrlF (111 aa).

The SpoVT-AbrB domain occupies Thr12–Asp59.

In terms of assembly, homodimer; forms a complex with YhaV with stoichiometry PrlF(2)-YhaV(4), possibly as a YhaV(2)-PrlF(2)-YhaV(2) complex like the MazFE complex.

Its subcellular location is the cytoplasm. Antitoxin component of a type II toxin-antitoxin (TA) system. Labile antitoxin that binds to the YhaV toxin and neutralizes its ribonuclease activity. Also acts as a transcription factor. The YhaV/PrlF complex binds the prlF-yhaV operon, probably negatively regulating its expression. The sequence is that of Antitoxin PrlF (prlF) from Escherichia coli O6:H1 (strain CFT073 / ATCC 700928 / UPEC).